We begin with the raw amino-acid sequence, 228 residues long: MQLSITHPCCWTLRLLLVSNLLLWENVALVPTCLVRNGRCFASLEEMLERAVGLSEEISKQALQLFTEFDNQYAQSKQLINKNFKKCHTSSLELPKPSSTSVQTHPITLLKIASKLLSAWKVPLNDLVNNLPSLKDIHPNILSKAREIEAKSAGLLEGVKSILIQMQNGDTEDENYPGWSGLASLQSENEDDRLFAYYNMIRCEGRETQKVETALKMVKCKISNENNC.

The first 29 residues, 1-29 (MQLSITHPCCWTLRLLLVSNLLLWENVAL), serve as a signal peptide directing secretion. Disulfide bonds link Cys-87–Cys-203 and Cys-220–Cys-228.

This sequence belongs to the somatotropin/prolactin family. As to expression, expressed specifically in the placenta. Highly expressed in invasive trophoblast cells lining the central placental vessel.

The protein localises to the secreted. The polypeptide is Prolactin-2A1 (Prl2a1) (Rattus norvegicus (Rat)).